The primary structure comprises 638 residues: Growth hormone receptor (638 aa).

A signal peptide spans Met1–Ala18. Topologically, residues Phe19–Arg264 are extracellular. The segment at Gly30–Pro51 is disordered. An N-linked (GlcNAc...) asparagine glycan is attached at Asn46. 2 disulfide bridges follow: Cys56–Cys66 and Cys101–Cys112. Asn115 is a glycosylation site (N-linked (GlcNAc...) asparagine). A disulfide bridge links Cys126 with Cys140. A Fibronectin type-III domain is found at Pro151 to Met254. Residues Asn156, Asn161, and Asn200 are each glycosylated (N-linked (GlcNAc...) asparagine). Residues Tyr240 to Ser244 carry the WSXWS motif motif. The required for ADAM17-mediated proteolysis stretch occupies residues Glu260–Asp262. Residues Phe265 to Ser288 traverse the membrane as a helical segment. At Lys289–Pro638 the chain is on the cytoplasmic side. Residues Lys294–Ala379 are required for JAK2 binding. The Box 1 motif signature appears at Ile297 to Lys305. The short motif at Asp340–Asp349 is the UbE motif element. A Phosphoserine modification is found at Ser341. Tyr487 carries the post-translational modification Phosphotyrosine. The interval Thr573–Val592 is disordered. A Phosphotyrosine modification is found at Tyr595.

Belongs to the type I cytokine receptor family. Type 1 subfamily. In terms of assembly, on growth hormone (GH) binding, forms homodimers and binds JAK2 via a box 1-containing domain. The soluble form (GHBP) is produced by phorbol ester-promoted proteolytic cleavage at the cell surface (shedding) by ADAM17/TACE. Shedding is inhibited by growth hormone (GH) binding to the receptor probably due to a conformational change in GHR rendering the receptor inaccessible to ADAM17. In terms of processing, on GH binding, phosphorylated on tyrosine residues in the cytoplasmic domain by JAK2. Post-translationally, ubiquitinated by the ECS(SOCS2) complex following ligand-binding and phosphorylation by JAK2, leading to its degradation by the proteasome. Regulation by the ECS(SOCS2) complex acts as a negative feedback loop of growth hormone receptor signaling. Ubiquitination is not sufficient for GHR internalization.

Its subcellular location is the cell membrane. It is found in the secreted. Receptor for pituitary gland growth hormone involved in regulating postnatal body growth. On ligand binding, couples to, and activates the JAK2/STAT5 pathway. Functionally, the soluble form acts as a reservoir of growth hormone in plasma and may be a modulator/inhibitor of GH signaling. The protein is Growth hormone receptor of Oryctolagus cuniculus (Rabbit).